A 482-amino-acid chain; its full sequence is MKFIIKLFPEITIKSQSVRLRFIKILTGNIRNVLKHYDETLAVVRHWDNIEVRAKDENQRLVIRDALTRIPGIHHILEVEDVPFTDMHDIFEKALAQYREQLEGKTFCVRVKRRGKHEFSSIEVERYVGGGLNQHIESARVKLTNPDVTVHLEVEDDRLLLIKGRYEGIGGFPIGTQEDVLSLISGGFDSGVSSYMLMRRGCRVHYCFFNLGGAAHEIGVRQVAHYLWNRFGSSHRVRFVAINFEPVVGEILEKVDDGQMGVVLKRMMVRAASKVAERYGVQALVTGEALGQVSSQTLTNLRLIDNVSDTLILRPLISYDKEHIINLARQIGTEDFARTMPEYCGVISKSPTVKAIKAKIEAEEENFDFSILDKVVEEANNVDIREIAQQTQQEVVEVETVSGFGPNDVILDIRSVDEQDDKPLKVEGVDVVSLPFYKLSTKFGDLDQSKTWLLWCERGVMSRLQALYLREQGFANVKVYRP.

Positions 61–165 constitute a THUMP domain; the sequence is LVIRDALTRI…DDRLLLIKGR (105 aa). ATP is bound by residues 183 to 184, Lys-265, Gly-287, and Gln-296; that span reads LI. Residues Cys-344 and Cys-456 are joined by a disulfide bond. Positions 404–482 constitute a Rhodanese domain; that stretch reads FGPNDVILDI…GFANVKVYRP (79 aa). Cys-456 serves as the catalytic Cysteine persulfide intermediate.

This sequence belongs to the ThiI family.

It localises to the cytoplasm. The enzyme catalyses [ThiI sulfur-carrier protein]-S-sulfanyl-L-cysteine + a uridine in tRNA + 2 reduced [2Fe-2S]-[ferredoxin] + ATP + H(+) = [ThiI sulfur-carrier protein]-L-cysteine + a 4-thiouridine in tRNA + 2 oxidized [2Fe-2S]-[ferredoxin] + AMP + diphosphate. The catalysed reaction is [ThiS sulfur-carrier protein]-C-terminal Gly-Gly-AMP + S-sulfanyl-L-cysteinyl-[cysteine desulfurase] + AH2 = [ThiS sulfur-carrier protein]-C-terminal-Gly-aminoethanethioate + L-cysteinyl-[cysteine desulfurase] + A + AMP + 2 H(+). It functions in the pathway cofactor biosynthesis; thiamine diphosphate biosynthesis. Functionally, catalyzes the ATP-dependent transfer of a sulfur to tRNA to produce 4-thiouridine in position 8 of tRNAs, which functions as a near-UV photosensor. Also catalyzes the transfer of sulfur to the sulfur carrier protein ThiS, forming ThiS-thiocarboxylate. This is a step in the synthesis of thiazole, in the thiamine biosynthesis pathway. The sulfur is donated as persulfide by IscS. The polypeptide is tRNA sulfurtransferase (Salmonella typhimurium (strain LT2 / SGSC1412 / ATCC 700720)).